The following is a 158-amino-acid chain: uncharacterized protein (158 aa).

This is an uncharacterized protein from Pasteurella multocida (strain Pm70).